We begin with the raw amino-acid sequence, 680 residues long: Harmonin-binding protein USHBP1 (680 aa).

Basic residues predominate over residues 1–15; it reads MSARATRPRSRRGRH. Disordered regions lie at residues 1–51 and 134–161; these read MSAR…YLGP and KSVE…PGQQ. Residues 179-218 are a coiled coil; sequence NREDELACTQASLQDAQAEKETLQRQVQELEDSLMQMEAS. 2 disordered regions span residues 220–247 and 384–405; these read PTPI…VPQD and TMEV…PTPE. Coiled coils occupy residues 363 to 386 and 467 to 506; these read TKGD…ATME and QIQQ…LRAQ. A disordered region spans residues 524 to 549; that stretch reads FAGDGSSGGSSEDPSSEEEAGEDRQQ. Residues 573–662 are a coiled coil; it reads QELSASLARA…QAEELAVLTA (90 aa).

This sequence belongs to the MCC family. In terms of assembly, interacts via its C-terminus with the first PDZ domain of USH1C.

The protein is Harmonin-binding protein USHBP1 of Mus musculus (Mouse).